Here is a 630-residue protein sequence, read N- to C-terminus: Putative polypeptide N-acetylgalactosaminyltransferase 10 (630 aa).

Residues 1–6 lie on the Cytoplasmic side of the membrane; the sequence is MNVDLR. A helical; Signal-anchor for type II membrane protein transmembrane segment spans residues 7–26; sequence LIVRLLLAILLTSLVTTILM. The Lumenal portion of the chain corresponds to 27–630; sequence GKQIHRRLVK…APYDPQREPH (604 aa). Residues asparagine 72, asparagine 84, asparagine 146, and asparagine 168 are each glycosylated (N-linked (GlcNAc...) asparagine). 3 cysteine pairs are disulfide-bonded: cysteine 157–cysteine 386, cysteine 377–cysteine 456, and cysteine 496–cysteine 513. The catalytic subdomain A stretch occupies residues 166 to 277; it reads LPNVTVIIAF…TNWLPPLLEP (112 aa). Substrate contacts are provided by aspartate 207 and arginine 238. Position 261 (aspartate 261) interacts with Mn(2+). Serine 262 serves as a coordination point for substrate. Histidine 263 provides a ligand contact to Mn(2+). Residues 333–394 form a catalytic subdomain B region; the sequence is PYRTPVLSGA…PCARVGHIGK (62 aa). Position 363 (tryptophan 363) interacts with substrate. Residue histidine 391 coordinates Mn(2+). The Ricin B-type lectin domain occupies 483–618; that stretch reads FSGVIESVAF…NQLEQQWKVG (136 aa). The N-linked (GlcNAc...) asparagine glycan is linked to asparagine 525. Intrachain disulfides connect cysteine 543-cysteine 559 and cysteine 586-cysteine 606.

It belongs to the glycosyltransferase 2 family. GalNAc-T subfamily. The cofactor is Mn(2+). As to expression, during embryonic stages 9-11, weakly expressed in the mesoderm. During embryonic stages 12-13, very weak expression is observed in the somatic mesoderm region. No expression detected from stage 14-15. During embryonic stages 16-17, expressed in the epidermis and the antennomaxillary complex. In third instar larvae, expressed ubiquitously in wing, eye-antennal, leg and haltere imaginal disks.

It localises to the golgi apparatus membrane. It catalyses the reaction L-seryl-[protein] + UDP-N-acetyl-alpha-D-galactosamine = a 3-O-[N-acetyl-alpha-D-galactosaminyl]-L-seryl-[protein] + UDP + H(+). The enzyme catalyses L-threonyl-[protein] + UDP-N-acetyl-alpha-D-galactosamine = a 3-O-[N-acetyl-alpha-D-galactosaminyl]-L-threonyl-[protein] + UDP + H(+). The protein operates within protein modification; protein glycosylation. May catalyze the initial reaction in O-linked oligosaccharide biosynthesis, the transfer of an N-acetyl-D-galactosamine residue to a serine or threonine residue on the protein receptor. The sequence is that of Putative polypeptide N-acetylgalactosaminyltransferase 10 (pgant10) from Drosophila melanogaster (Fruit fly).